Here is a 152-residue protein sequence, read N- to C-terminus: SXP/RAL-2 family protein Ani s 5 (152 aa).

Residues 1–18 (MKTLIVAALFCTIGMALA) form the signal peptide. Necessary for IgE-binding regions lie at residues 25-42 (PPFLAGAPQDVVKAFFEL), 49-54 (KTDPEI), 58-66 (LDAWVDTLG), and 103-120 (KKADAELSKIAEDDSLNG). IgG4-binding stretches follow at residues 49-68 (KTDPEIEKDLDAWVDTLGGD) and 118-137 (LNGIQKAQKIQAIYKTLPQS). An igE-binding and IgG4-binding region spans residues 127–146 (IQAIYKTLPQSVKDELEKGI).

Belongs to the SXP/RAL-2 family. As to quaternary structure, monomer. Excretory gland, ventriculus, and the luminal epithelium of the intestine of the larvae.

It is found in the secreted. In Anisakis simplex (Herring worm), this protein is SXP/RAL-2 family protein Ani s 5.